A 140-amino-acid chain; its full sequence is L-fucose mutarotase (140 aa).

Histidine 22 serves as the catalytic Proton donor. Substrate is bound by residues aspartate 30, arginine 107, and 129-131; that span reads YGN.

The protein belongs to the RbsD / FucU family. FucU mutarotase subfamily. As to quaternary structure, homodecamer.

The protein localises to the cytoplasm. It carries out the reaction alpha-L-fucose = beta-L-fucose. The protein operates within carbohydrate metabolism; L-fucose metabolism. In terms of biological role, involved in the anomeric conversion of L-fucose. In Klebsiella pneumoniae subsp. pneumoniae (strain ATCC 700721 / MGH 78578), this protein is L-fucose mutarotase.